Reading from the N-terminus, the 392-residue chain is Enoyl-[acyl-carrier-protein] reductase [NADH] (392 aa).

NAD(+)-binding positions include 48–53 (GCSTGY), 74–75 (FE), 111–112 (DA), and 139–140 (LA). Tyrosine 225 is a binding site for substrate. Tyrosine 235 (proton donor) is an active-site residue. NAD(+) is bound by residues lysine 244 and 273–275 (LVT).

The protein belongs to the TER reductase family. In terms of assembly, monomer.

It catalyses the reaction a 2,3-saturated acyl-[ACP] + NAD(+) = a (2E)-enoyl-[ACP] + NADH + H(+). It participates in lipid metabolism; fatty acid biosynthesis. Its function is as follows. Involved in the final reduction of the elongation cycle of fatty acid synthesis (FAS II). Catalyzes the reduction of a carbon-carbon double bond in an enoyl moiety that is covalently linked to an acyl carrier protein (ACP). The polypeptide is Enoyl-[acyl-carrier-protein] reductase [NADH] (Idiomarina loihiensis (strain ATCC BAA-735 / DSM 15497 / L2-TR)).